The sequence spans 276 residues: Urease accessory protein UreD (276 aa).

This sequence belongs to the UreD family. UreD, UreF and UreG form a complex that acts as a GTP-hydrolysis-dependent molecular chaperone, activating the urease apoprotein by helping to assemble the nickel containing metallocenter of UreC. The UreE protein probably delivers the nickel.

The protein resides in the cytoplasm. Required for maturation of urease via the functional incorporation of the urease nickel metallocenter. The sequence is that of Urease accessory protein UreD from Paracidovorax citrulli (strain AAC00-1) (Acidovorax citrulli).